We begin with the raw amino-acid sequence, 598 residues long: Aspartate--tRNA(Asp/Asn) ligase (598 aa).

E177 provides a ligand contact to L-aspartate. An aspartate region spans residues 201-204; sequence QIFK. 2 residues coordinate L-aspartate: R223 and H451. 223-225 contacts ATP; the sequence is RDE. E485 provides a ligand contact to ATP. R492 serves as a coordination point for L-aspartate. 537-540 contributes to the ATP binding site; the sequence is GVDR.

The protein belongs to the class-II aminoacyl-tRNA synthetase family. Type 1 subfamily. Homodimer.

It is found in the cytoplasm. The catalysed reaction is tRNA(Asx) + L-aspartate + ATP = L-aspartyl-tRNA(Asx) + AMP + diphosphate. Aspartyl-tRNA synthetase with relaxed tRNA specificity since it is able to aspartylate not only its cognate tRNA(Asp) but also tRNA(Asn). Reaction proceeds in two steps: L-aspartate is first activated by ATP to form Asp-AMP and then transferred to the acceptor end of tRNA(Asp/Asn). The sequence is that of Aspartate--tRNA(Asp/Asn) ligase from Anaplasma phagocytophilum (strain HZ).